Consider the following 225-residue polypeptide: Endonuclease V (225 aa).

Residues Asp43 and Asp110 each contribute to the Mg(2+) site.

It belongs to the endonuclease V family. The cofactor is Mg(2+).

Its subcellular location is the cytoplasm. The enzyme catalyses Endonucleolytic cleavage at apurinic or apyrimidinic sites to products with a 5'-phosphate.. Functionally, DNA repair enzyme involved in the repair of deaminated bases. Selectively cleaves double-stranded DNA at the second phosphodiester bond 3' to a deoxyinosine leaving behind the intact lesion on the nicked DNA. The sequence is that of Endonuclease V from Thermotoga neapolitana (strain ATCC 49049 / DSM 4359 / NBRC 107923 / NS-E).